Here is a 259-residue protein sequence, read N- to C-terminus: Nodulation protein J (259 aa).

Residues 30–256 form the ABC transmembrane type-2 domain; the sequence is ASILGNLADP…LVSTALLRRR (227 aa). 6 helical membrane passes run 32–52, 64–84, 116–136, 141–161, 174–194, and 228–248; these read ILGNLADPVIYLFGLGAGLGV, AFLAAGMIATSAMTAATFETI, AWAATKASLAGTGIGIVAAML, WLALLYALPVIAITGLAFASL, YFIFYQTLVITPMLFLSGAVF, and IANVCLHIGVLCIYIVVPFLV.

This sequence belongs to the ABC-2 integral membrane protein family. Lipooligosaccharide exporter (TC 3.A.1.102) subfamily. In terms of assembly, the complex is composed of two ATP-binding proteins (NodI) and two transmembrane proteins (NodJ).

The protein resides in the cell inner membrane. In terms of biological role, part of the ABC transporter complex NodIJ involved in the export of the nodulation factors (Nod factors), the bacterial signal molecules that induce symbiosis and subsequent nodulation induction. Nod factors are LCO (lipo-chitin oligosaccharide), a modified beta-1,4-linked N-acetylglucosamine oligosaccharide. This subunit encodes the transporter. The protein is Nodulation protein J (nodJ) of Rhizobium leguminosarum bv. viciae.